The chain runs to 59 residues: UPF0391 membrane protein lpg2521 (59 aa).

2 helical membrane passes run 5-25 (ALIF…GIAV) and 30-50 (IAKI…IMGL).

This sequence belongs to the UPF0391 family.

The protein resides in the cell membrane. This chain is UPF0391 membrane protein lpg2521, found in Legionella pneumophila subsp. pneumophila (strain Philadelphia 1 / ATCC 33152 / DSM 7513).